A 654-amino-acid polypeptide reads, in one-letter code: Pentatricopeptide repeat-containing protein At4g19191, mitochondrial (654 aa).

The transit peptide at 1-65 (MSLIHRRLYR…PFVAKACARL (65 aa)) directs the protein to the mitochondrion. 13 PPR repeats span residues 86-116 (DVFVGTATVDMFVKCNSVDYAAKVFERMPER), 117-151 (DATTWNAMLSGFCQSGHTDKAFSLFREMRLNEITP), 152-186 (DSVTVMTLIQSASFEKSLKLLEAMHAVGIRLGVDV), 187-217 (QVTVANTWISTYGKCGDLDSAKLVFEAIDRG), 220-254 (TVVSWNSMFKAYSVFGEAFDAFGLYCLMLREEFKP), 255-289 (DLSTFINLAASCQNPETLTQGRLIHSHAIHLGTDQ), 290-320 (DIEAINTFISMYSKSEDTCSARLLFDIMTSR), 321-355 (TCVSWTVMISGYAEKGDMDEALALFHAMIKSGEKP), 356-390 (DLVTLLSLISGCGKFGSLETGKWIDARADIYGCKR), 392-422 (NVMICNALIDMYSKCGSIHEARDIFDNTPEK), 423-457 (TVVTWTTMIAGYALNGIFLEALKLFSKMIDLDYKP), 458-488 (NHITFLAVLQACAHSGSLEKGWEYFHIMKQV), and 494-524 (GLDHYSCMVDLLGRKGKLEEALELIRNMSAK). The segment at 529–604 (IWGALLNACK…YPGESVIQVN (76 aa)) is type E motif. The tract at residues 605-635 (GKNHSFTVGEHGHVENEVIYFTLNGLSLFAK) is type E(+) motif.

It belongs to the PPR family. PCMP-E subfamily.

It is found in the mitochondrion. In Arabidopsis thaliana (Mouse-ear cress), this protein is Pentatricopeptide repeat-containing protein At4g19191, mitochondrial (PCMP-E1).